The following is a 680-amino-acid chain: DNA-directed RNA polymerase subunit beta' (680 aa).

The Zn(2+) site is built by Cys-69, Cys-71, Cys-87, and Cys-90. Residues Asp-489, Asp-491, and Asp-493 each coordinate Mg(2+).

Belongs to the RNA polymerase beta' chain family. RpoC1 subfamily. In terms of assembly, in plastids the minimal PEP RNA polymerase catalytic core is composed of four subunits: alpha, beta, beta', and beta''. When a (nuclear-encoded) sigma factor is associated with the core the holoenzyme is formed, which can initiate transcription. The cofactor is Mg(2+). Zn(2+) is required as a cofactor.

The protein localises to the plastid. It is found in the chloroplast. The enzyme catalyses RNA(n) + a ribonucleoside 5'-triphosphate = RNA(n+1) + diphosphate. In terms of biological role, DNA-dependent RNA polymerase catalyzes the transcription of DNA into RNA using the four ribonucleoside triphosphates as substrates. The protein is DNA-directed RNA polymerase subunit beta' of Ranunculus macranthus (Large buttercup).